A 284-amino-acid chain; its full sequence is Acetyl-coenzyme A carboxylase carboxyl transferase subunit beta (284 aa).

Positions 25-284 constitute a CoA carboxyltransferase N-terminal domain; the sequence is LWTKCPKCES…ICRMLLQKSA (260 aa). 4 residues coordinate Zn(2+): Cys-29, Cys-32, Cys-48, and Cys-51. The C4-type zinc finger occupies 29-51; the sequence is CPKCESTLYRAEVRRNLEVCPKC.

This sequence belongs to the AccD/PCCB family. As to quaternary structure, acetyl-CoA carboxylase is a heterohexamer composed of biotin carboxyl carrier protein (AccB), biotin carboxylase (AccC) and two subunits each of ACCase subunit alpha (AccA) and ACCase subunit beta (AccD). It depends on Zn(2+) as a cofactor.

Its subcellular location is the cytoplasm. The enzyme catalyses N(6)-carboxybiotinyl-L-lysyl-[protein] + acetyl-CoA = N(6)-biotinyl-L-lysyl-[protein] + malonyl-CoA. It participates in lipid metabolism; malonyl-CoA biosynthesis; malonyl-CoA from acetyl-CoA: step 1/1. Functionally, component of the acetyl coenzyme A carboxylase (ACC) complex. Biotin carboxylase (BC) catalyzes the carboxylation of biotin on its carrier protein (BCCP) and then the CO(2) group is transferred by the transcarboxylase to acetyl-CoA to form malonyl-CoA. In Hydrogenovibrio crunogenus (strain DSM 25203 / XCL-2) (Thiomicrospira crunogena), this protein is Acetyl-coenzyme A carboxylase carboxyl transferase subunit beta.